A 177-amino-acid polypeptide reads, in one-letter code: Ubiquinol-cytochrome c reductase iron-sulfur subunit (177 aa).

A helical transmembrane segment spans residues 18 to 38 (IVLTASSVAAVGAACAFWPII). A Rieske domain is found at 88–175 (ARAVKMSELI…YIFISDTKIR (88 aa)). [2Fe-2S] cluster contacts are provided by Cys120, His122, Cys139, and His142. Residues Cys125 and Cys141 are joined by a disulfide bond.

This sequence belongs to the Rieske iron-sulfur protein family. As to quaternary structure, the main subunits of complex b-c1 are: cytochrome b, cytochrome c1 and the Rieske protein. Requires [2Fe-2S] cluster as cofactor.

It localises to the cell membrane. It carries out the reaction a quinol + 2 Fe(III)-[cytochrome c](out) = a quinone + 2 Fe(II)-[cytochrome c](out) + 2 H(+)(out). In terms of biological role, component of the ubiquinol-cytochrome c reductase complex (complex III or cytochrome b-c1 complex), which is a respiratory chain that generates an electrochemical potential coupled to ATP synthesis. The sequence is that of Ubiquinol-cytochrome c reductase iron-sulfur subunit (petA) from Rickettsia typhi (strain ATCC VR-144 / Wilmington).